The chain runs to 52 residues: UPF0391 membrane protein XCV0245 (52 aa).

2 consecutive transmembrane segments (helical) span residues 5–25 (AIIFFVIAIIAAVLGFSGIAG) and 27–47 (ATNIAWILFVVFLILAVISMF).

Belongs to the UPF0391 family.

Its subcellular location is the cell membrane. The polypeptide is UPF0391 membrane protein XCV0245 (Xanthomonas euvesicatoria pv. vesicatoria (strain 85-10) (Xanthomonas campestris pv. vesicatoria)).